The following is a 1227-amino-acid chain: Beta-alanyl-bioamine nonribosomal peptide synthetase (1227 aa).

The adenylation stretch occupies residues 1-850 (MPQSTAQLKS…FGKNSRDFKL (850 aa)). The region spanning 851-931 (SRGRERARKV…SILTSLQNTE (81 aa)) is the Carrier domain. Ser892 carries the O-(pantetheine 4'-phosphoryl)serine modification. A condensation region spans residues 932–1227 (SDFLKTQEPF…YMIKELNPSS (296 aa)).

It belongs to the NRP synthetase family. The cofactor is pantetheine 4'-phosphate. In virgin and paired males, bilaterally expressed in some cells in the head. During pairing, expressed throughout the ventral side of the body probably in ciliated neurons. Highly expressed in virgin females in cells throughout the body and only weakly expressed in sexually mature females. In virgin females, expressed in some cells in the head and on the dorsal surface and lateral edges of body.

It carries out the reaction tryptamine + beta-alanine + ATP = beta-alanyl-tryptamine + AMP + diphosphate + H(+). The catalysed reaction is beta-alanine + ATP + H(+) = beta-alanyl-5'-AMP + diphosphate. It catalyses the reaction beta-alanyl-5'-AMP + holo-[peptidyl-carrier protein] = beta-alanyl-[peptidyl-carrier protein] + AMP + H(+). The enzyme catalyses beta-alanyl-[peptidyl-carrier protein] + tryptamine = beta-alanyl-tryptamine + holo-[peptidyl-carrier protein] + H(+). In terms of biological role, catalyzes the condensation of beta-alanine with tryptamine to form beta-alanyl-tryptamine (BATT). Beta-alanyl-tryptamine is an essential pheromone produced by the male that stimulates female sexual development during pairing. This Schistosoma mansoni (Blood fluke) protein is Beta-alanyl-bioamine nonribosomal peptide synthetase.